The primary structure comprises 411 residues: MTQRIAVLGATGSIGDSTLSILAAHPEHYQVYALSGHGRLDKLFELCQQFRPSRVAVPENKVDDFATRLAAAQIACEVVGGQAGLDDIALDPQVDTVVAAIVGAAGLASTLSAAKAGKRVLLANKEALVMAGSLMMQAVRDNGATLLPLDSEHNAIFQCLPPQIQQNNTAIHDASHGVKKLWLTASGGPFLNKTWEQMQAASVSEAVKHPNWSMGQKISVDSATMMNKGLELIEACHLFDLAESQINVVIHPQSIIHSLVEYCDGSFLAQMGSPDMRTPIAHALAYPNRISAGVESLDLYQLSSLEFIKPDLKKFACLKLAREAMQSGQAASITLNAANEVAVEAFIKQQVSLTDIALINAQVLDKMLGKDKSVAGHAAISVRQITELNDILMIDKIAREQAQLEVMACRN.

Positions 11, 12, 13, 14, and 124 each coordinate NADPH. Residue Lys-125 coordinates 1-deoxy-D-xylulose 5-phosphate. Position 126 (Glu-126) interacts with NADPH. Asp-150 provides a ligand contact to Mn(2+). The 1-deoxy-D-xylulose 5-phosphate site is built by Ser-151, Glu-152, Ser-186, and His-209. Position 152 (Glu-152) interacts with Mn(2+). Gly-215 serves as a coordination point for NADPH. 1-deoxy-D-xylulose 5-phosphate-binding residues include Ser-222, Asn-227, Lys-228, and Glu-231. Glu-231 is a Mn(2+) binding site.

The protein belongs to the DXR family. Mg(2+) is required as a cofactor. Requires Mn(2+) as cofactor.

It catalyses the reaction 2-C-methyl-D-erythritol 4-phosphate + NADP(+) = 1-deoxy-D-xylulose 5-phosphate + NADPH + H(+). It functions in the pathway isoprenoid biosynthesis; isopentenyl diphosphate biosynthesis via DXP pathway; isopentenyl diphosphate from 1-deoxy-D-xylulose 5-phosphate: step 1/6. Functionally, catalyzes the NADPH-dependent rearrangement and reduction of 1-deoxy-D-xylulose-5-phosphate (DXP) to 2-C-methyl-D-erythritol 4-phosphate (MEP). The polypeptide is 1-deoxy-D-xylulose 5-phosphate reductoisomerase (Psychrobacter sp. (strain PRwf-1)).